The primary structure comprises 66 residues: Large ribosomal subunit protein bL35 (66 aa).

Residues 1 to 16 (MPKQKTHRASAKRFKR) are compositionally biased toward basic residues. Residues 1–20 (MPKQKTHRASAKRFKRTGSG) form a disordered region.

Belongs to the bacterial ribosomal protein bL35 family.

This chain is Large ribosomal subunit protein bL35, found in Streptococcus thermophilus (strain CNRZ 1066).